Reading from the N-terminus, the 384-residue chain is SAGA complex subunit Spt3 (384 aa).

The protein belongs to the SPT3 family. Component of the Spt-Ada-Gcn5 acetyltransferase (SAGA) complex consisting of wda/Taf5L, Saf6, Taf9, Taf10b, Taf12, Ada1, Spt3, Spt7, Spt20, Sf3b3, Sf3b5, Nipped-A/Tra1, a histone acetyltransferase (HAT) module made up of Gcn5, Ada2b (Isoform B), Ada3 and Sgf29, and a deubiquitinase (DUB) module made up of not/nonstop, Sgf11 and e(y)2 tethered to SAGA by Atxn7. Taf5 and Taf10, which has partially redundant properties with Taf10b, may also be part of this complex.

Its subcellular location is the nucleus. The protein localises to the chromosome. Functionally, component of the transcription regulatory complex SAGA, a multiprotein complex that activates transcription by remodeling chromatin and mediating histone acetylation and deubiquitination. The SAGA complex predominantly acetylates histone H3. Required for oogenesis; involved in transcriptional activation. The chain is SAGA complex subunit Spt3 from Drosophila melanogaster (Fruit fly).